The primary structure comprises 221 residues: Phosphoribosylformylglycinamidine synthase subunit PurQ (221 aa).

Residues 5–221 (TVGIVVFPGS…LYTLRSLITQ (217 aa)) form the Glutamine amidotransferase type-1 domain. Cys89 functions as the Nucleophile in the catalytic mechanism. Residues His197 and Glu199 contribute to the active site.

Part of the FGAM synthase complex composed of 1 PurL, 1 PurQ and 2 PurS subunits.

Its subcellular location is the cytoplasm. It catalyses the reaction N(2)-formyl-N(1)-(5-phospho-beta-D-ribosyl)glycinamide + L-glutamine + ATP + H2O = 2-formamido-N(1)-(5-O-phospho-beta-D-ribosyl)acetamidine + L-glutamate + ADP + phosphate + H(+). The catalysed reaction is L-glutamine + H2O = L-glutamate + NH4(+). The protein operates within purine metabolism; IMP biosynthesis via de novo pathway; 5-amino-1-(5-phospho-D-ribosyl)imidazole from N(2)-formyl-N(1)-(5-phospho-D-ribosyl)glycinamide: step 1/2. Functionally, part of the phosphoribosylformylglycinamidine synthase complex involved in the purines biosynthetic pathway. Catalyzes the ATP-dependent conversion of formylglycinamide ribonucleotide (FGAR) and glutamine to yield formylglycinamidine ribonucleotide (FGAM) and glutamate. The FGAM synthase complex is composed of three subunits. PurQ produces an ammonia molecule by converting glutamine to glutamate. PurL transfers the ammonia molecule to FGAR to form FGAM in an ATP-dependent manner. PurS interacts with PurQ and PurL and is thought to assist in the transfer of the ammonia molecule from PurQ to PurL. The polypeptide is Phosphoribosylformylglycinamidine synthase subunit PurQ (Prochlorococcus marinus subsp. pastoris (strain CCMP1986 / NIES-2087 / MED4)).